Consider the following 129-residue polypeptide: Large ribosomal subunit protein bL17 (129 aa).

Belongs to the bacterial ribosomal protein bL17 family. Part of the 50S ribosomal subunit. Contacts protein L32.

This is Large ribosomal subunit protein bL17 from Yersinia pseudotuberculosis serotype O:1b (strain IP 31758).